The sequence spans 128 residues: Holin-like protein CidA (128 aa).

Transmembrane regions (helical) follow at residues 4–24 (LLLT…INWV), 26–46 (ALLH…FTLL), 59–79 (GAAW…VGVI), and 88–108 (FGVS…VSTG).

This sequence belongs to the CidA/LrgA family. CidA subfamily.

The protein localises to the cell membrane. In terms of biological role, increases the activity of extracellular murein hydrolases possibly by mediating their export via hole formation. Inhibited by the antiholin-like proteins LrgAB. In an unstressed cell, the LrgAB products probably inhibit the function of the CidA protein. When a cell is stressed by the addition of antibiotics or by other factors in the environment, CidA possibly oligomerizes within the bacterial cell membrane, creating lesions that disrupt the proton motive force, which in turn results in loss of cell viability. These lesions are also hypothesized to regulate the subsequent cell lysis by either allowing the murein hydrolases access to the cell wall substrate and/or regulating their activity by a possible change in the cell wall pH that results from loss of membrane potential. In Bacillus subtilis (strain 168), this protein is Holin-like protein CidA.